Consider the following 994-residue polypeptide: Sarcoplasmic/endoplasmic reticulum calcium ATPase 1 (994 aa).

Topologically, residues 1–48 (MENAHAKTAEECLAFFGVNESVGLSGEQVRRALEKYGHNELPAEEGKT) are cytoplasmic. A helical transmembrane segment spans residues 49–69 (IWELVVEQFEDLLVRILLLAA). At 70 to 89 (CISFVLAWFEEGEETITAFV) the chain is on the lumenal side. Residues 90–110 (EPFVILLILIANAVVGVWQER) form a helical membrane-spanning segment. The Cytoplasmic segment spans residues 111 to 253 (NAENAIEALK…QDKTPLQQKL (143 aa)). The helical transmembrane segment at 254 to 273 (DEFGEQLSKVISLICVAVWL) threads the bilayer. At 274-295 (INIGHFNDPVHGGSWIRGAIYY) the chain is on the lumenal side. The helical transmembrane segment at 296-313 (FKIAVALAVAAIPEGLPA) threads the bilayer. Ca(2+)-binding residues include Val-304, Ala-305, Ile-307, and Glu-309. The Cytoplasmic portion of the chain corresponds to 314-757 (VITTCLALGT…EEGRAIYNNM (444 aa)). Asp-351 acts as the 4-aspartylphosphate intermediate in catalysis. Mg(2+) contacts are provided by Asp-351 and Thr-353. The ATP site is built by Thr-353, Glu-442, Arg-489, Lys-515, Arg-560, Thr-625, Gly-626, Asp-627, Arg-678, and Lys-684. A Mg(2+)-binding site is contributed by Asp-703. Residue Asn-706 participates in ATP binding. Residues 758–777 (KQFIRYLISSNVGEVVCIFL) form a helical membrane-spanning segment. Residues Asn-768 and Glu-771 each contribute to the Ca(2+) site. The Lumenal segment spans residues 778–787 (TAALGLPEAL). Residues 788–808 (IPVQLLWVNLVTDGLPATALG) traverse the membrane as a helical segment. The interval 788 to 808 (IPVQLLWVNLVTDGLPATALG) is interaction with PLN. The Ca(2+) site is built by Asn-796, Thr-799, and Asp-800. Residues 809–828 (FNPPDLDIMDKPPRSPKEPL) lie on the Cytoplasmic side of the membrane. A helical membrane pass occupies residues 829–851 (ISGWLFFRYLAIGGYVGAATVGA). At 852 to 897 (AAWWFLYAEDGPSLTYHQLTHFMQCTHHNAEFEGVDCDIFESPVPM) the chain is on the lumenal side. Cys-876 and Cys-888 are joined by a disulfide. The helical transmembrane segment at 898–917 (TMALSVLVTIEMCNALNSLS) threads the bilayer. Glu-908 contributes to the Ca(2+) binding site. At 918–930 (ENQSLLRMPPWVN) the chain is on the cytoplasmic side. The chain crosses the membrane as a helical span at residues 931–949 (IWLVGSICLSMSLHFVILY). An interaction with PLN region spans residues 932–943 (WLVGSICLSMSL). Over 950 to 964 (VDPLPMIFKLTHLDL) the chain is Lumenal. Residues 965–985 (AHWLVVLRISFPVILLDEALK) traverse the membrane as a helical segment. Residues 986-994 (FVARNYLEA) are Cytoplasmic-facing.

Belongs to the cation transport ATPase (P-type) (TC 3.A.3) family. Type IIA subfamily. In terms of assembly, interacts with sarcolipin (SLN). Interacts with phospholamban (PLN). Interacts with myoregulin (MRLN). Interacts with DWORF. Requires Mg(2+) as cofactor.

The protein resides in the endoplasmic reticulum membrane. It is found in the sarcoplasmic reticulum membrane. The catalysed reaction is Ca(2+)(in) + ATP + H2O = Ca(2+)(out) + ADP + phosphate + H(+). With respect to regulation, inhibited by sarcolipin (SLN) and myoregulin (MRLN). Also shown to be inhibited by phospholamban (PLN) in vitro. Enhanced by DWORF; DWORF increases activity by displacing sarcolipin (SLN), phospholamban (PLN) and myoregulin (MRLN). Key regulator of striated muscle performance by acting as the major Ca(2+) ATPase responsible for the reuptake of cytosolic Ca(2+) into the sarcoplasmic reticulum. Catalyzes the hydrolysis of ATP coupled with the translocation of calcium from the cytosol to the sarcoplasmic reticulum lumen. Contributes to calcium sequestration involved in muscular excitation/contraction. The protein is Sarcoplasmic/endoplasmic reticulum calcium ATPase 1 (ATP2A1) of Gallus gallus (Chicken).